The chain runs to 323 residues: Lipoyl synthase (323 aa).

[4Fe-4S] cluster is bound by residues Cys-65, Cys-70, Cys-76, Cys-91, Cys-95, Cys-98, and Ser-304. The 217-residue stretch at 77 to 293 folds into the Radical SAM core domain; sequence FNNGTATFMI…KKEALSIGFT (217 aa).

It belongs to the radical SAM superfamily. Lipoyl synthase family. [4Fe-4S] cluster is required as a cofactor.

The protein resides in the cytoplasm. The catalysed reaction is [[Fe-S] cluster scaffold protein carrying a second [4Fe-4S](2+) cluster] + N(6)-octanoyl-L-lysyl-[protein] + 2 oxidized [2Fe-2S]-[ferredoxin] + 2 S-adenosyl-L-methionine + 4 H(+) = [[Fe-S] cluster scaffold protein] + N(6)-[(R)-dihydrolipoyl]-L-lysyl-[protein] + 4 Fe(3+) + 2 hydrogen sulfide + 2 5'-deoxyadenosine + 2 L-methionine + 2 reduced [2Fe-2S]-[ferredoxin]. It functions in the pathway protein modification; protein lipoylation via endogenous pathway; protein N(6)-(lipoyl)lysine from octanoyl-[acyl-carrier-protein]: step 2/2. Functionally, catalyzes the radical-mediated insertion of two sulfur atoms into the C-6 and C-8 positions of the octanoyl moiety bound to the lipoyl domains of lipoate-dependent enzymes, thereby converting the octanoylated domains into lipoylated derivatives. This chain is Lipoyl synthase, found in Buchnera aphidicola subsp. Acyrthosiphon pisum (strain APS) (Acyrthosiphon pisum symbiotic bacterium).